Here is a 210-residue protein sequence, read N- to C-terminus: Thymidylate kinase (210 aa).

10-17 is an ATP binding site; that stretch reads GPEGAGKS.

The protein belongs to the thymidylate kinase family.

The enzyme catalyses dTMP + ATP = dTDP + ADP. Functionally, phosphorylation of dTMP to form dTDP in both de novo and salvage pathways of dTTP synthesis. This chain is Thymidylate kinase, found in Pseudomonas putida (strain ATCC 700007 / DSM 6899 / JCM 31910 / BCRC 17059 / LMG 24140 / F1).